The primary structure comprises 57 residues: Small ribosomal subunit protein eS27 (57 aa).

Residues Cys10, Cys13, Cys29, and Cys32 each coordinate Zn(2+). Residues 10–32 (CPDCENEQSLFEKAASEVSCAVC) form a C4-type zinc finger.

It belongs to the eukaryotic ribosomal protein eS27 family. As to quaternary structure, part of the 30S ribosomal subunit. It depends on Zn(2+) as a cofactor.

This Haloarcula marismortui (strain ATCC 43049 / DSM 3752 / JCM 8966 / VKM B-1809) (Halobacterium marismortui) protein is Small ribosomal subunit protein eS27.